Here is a 515-residue protein sequence, read N- to C-terminus: Sterol 14-alpha demethylase cyp51A (515 aa).

Residues 7–29 (LTAYMAVAVLTAILLNVVYQLFF) form a helical membrane-spanning segment. 2 N-linked (GlcNAc...) asparagine glycosylation sites follow: Asn-33 and Asn-269. Cys-454 is a heme binding site. A glycan (N-linked (GlcNAc...) asparagine) is linked at Asn-512.

Belongs to the cytochrome P450 family. The cofactor is heme.

The protein localises to the endoplasmic reticulum membrane. It catalyses the reaction a 14alpha-methyl steroid + 3 reduced [NADPH--hemoprotein reductase] + 3 O2 = a Delta(14) steroid + formate + 3 oxidized [NADPH--hemoprotein reductase] + 4 H2O + 4 H(+). It carries out the reaction a 14alpha-methyl steroid + reduced [NADPH--hemoprotein reductase] + O2 = a 14alpha-hydroxymethyl steroid + oxidized [NADPH--hemoprotein reductase] + H2O + H(+). The catalysed reaction is a 14alpha-hydroxymethyl steroid + reduced [NADPH--hemoprotein reductase] + O2 = a 14alpha-formyl steroid + oxidized [NADPH--hemoprotein reductase] + 2 H2O + H(+). The enzyme catalyses a 14alpha-formyl steroid + reduced [NADPH--hemoprotein reductase] + O2 = a Delta(14) steroid + formate + oxidized [NADPH--hemoprotein reductase] + H2O + 2 H(+). It catalyses the reaction lanosterol + 3 reduced [NADPH--hemoprotein reductase] + 3 O2 = 4,4-dimethyl-5alpha-cholesta-8,14,24-trien-3beta-ol + formate + 3 oxidized [NADPH--hemoprotein reductase] + 4 H2O + 4 H(+). It carries out the reaction lanosterol + reduced [NADPH--hemoprotein reductase] + O2 = 32-hydroxylanosterol + oxidized [NADPH--hemoprotein reductase] + H2O + H(+). The catalysed reaction is 32-hydroxylanosterol + reduced [NADPH--hemoprotein reductase] + O2 = 32-oxolanosterol + oxidized [NADPH--hemoprotein reductase] + 2 H2O + H(+). The enzyme catalyses 32-oxolanosterol + reduced [NADPH--hemoprotein reductase] + O2 = 4,4-dimethyl-5alpha-cholesta-8,14,24-trien-3beta-ol + formate + oxidized [NADPH--hemoprotein reductase] + H2O + 2 H(+). It catalyses the reaction eburicol + 3 reduced [NADPH--hemoprotein reductase] + 3 O2 = 14-demethyleburicol + formate + 3 oxidized [NADPH--hemoprotein reductase] + 4 H2O + 4 H(+). It carries out the reaction eburicol + reduced [NADPH--hemoprotein reductase] + O2 = 32-hydroxyeburicol + oxidized [NADPH--hemoprotein reductase] + H2O + H(+). The catalysed reaction is 32-hydroxyeburicol + reduced [NADPH--hemoprotein reductase] + O2 = 32-oxoeburicol + oxidized [NADPH--hemoprotein reductase] + 2 H2O + H(+). The enzyme catalyses 32-oxoeburicol + reduced [NADPH--hemoprotein reductase] + O2 = 14-demethyleburicol + formate + oxidized [NADPH--hemoprotein reductase] + H2O + 2 H(+). It functions in the pathway steroid metabolism; ergosterol biosynthesis. The sterol 14-alpha demethylase activity is inhibited by azole compounds. Activity is inhibited by the novel and long-acting fungicidal azole, PC1244. In terms of biological role, sterol 14alpha-demethylase, encoded by cyp51A and cyp51B, that plays a critical role in the third module of ergosterol biosynthesis pathway, being ergosterol the major sterol component in fungal membranes that participates in a variety of functions. The third module or late pathway involves the ergosterol synthesis itself through consecutive reactions that mainly occur in the endoplasmic reticulum (ER) membrane. In filamentous fungi, during the initial step of this module, lanosterol (lanosta-8,24-dien-3beta-ol) can be metabolized to eburicol. Sterol 14alpha-demethylase catalyzes the three-step oxidative removal of the 14alpha-methyl group (C-32) of both these sterols in the form of formate, and converts eburicol and lanosterol to 14-demethyleburicol (4,4,24-trimethylergosta-8,14,24(28)-trienol) and 4,4-dimethyl-5alpha-cholesta-8,14,24-trien-3beta-ol, respectively, which are further metabolized by other enzymes in the pathway to ergosterol. Can also use substrates not intrinsic to fungi, such as 24,25-dihydrolanosterol (DHL), producing 4,4'-dimethyl-8,14-cholestadien-3-beta-ol, but at lower rates than the endogenous substrates. Its function is as follows. As a target of azole drugs, plays a crucial role in azole susceptibility. The sequence is that of Sterol 14-alpha demethylase cyp51A from Aspergillus fumigatus (strain ATCC MYA-4609 / CBS 101355 / FGSC A1100 / Af293) (Neosartorya fumigata).